Here is a 463-residue protein sequence, read N- to C-terminus: L-seryl-tRNA(Sec) selenium transferase (463 aa).

Position 295 is an N6-(pyridoxal phosphate)lysine (K295).

The protein belongs to the SelA family. As to quaternary structure, homodecamer; pentamer of dimers. Binds only one seryl-tRNA(Sec) per dimer. Pyridoxal 5'-phosphate serves as cofactor.

It localises to the cytoplasm. It carries out the reaction L-seryl-tRNA(Sec) + selenophosphate + H(+) = L-selenocysteinyl-tRNA(Sec) + phosphate. It participates in aminoacyl-tRNA biosynthesis; selenocysteinyl-tRNA(Sec) biosynthesis; selenocysteinyl-tRNA(Sec) from L-seryl-tRNA(Sec) (bacterial route): step 1/1. Converts seryl-tRNA(Sec) to selenocysteinyl-tRNA(Sec) required for selenoprotein biosynthesis. This chain is L-seryl-tRNA(Sec) selenium transferase, found in Escherichia coli O6:H1 (strain CFT073 / ATCC 700928 / UPEC).